The following is a 314-amino-acid chain: L-lactate dehydrogenase 1 (314 aa).

NAD(+) is bound by residues Val-16, Asp-37, Lys-42, Tyr-68, and 82–83 (GL). Substrate contacts are provided by residues Gln-85, Arg-91, and 123 to 126 (NPVD). NAD(+)-binding positions include 121–123 (ATN) and Ser-146. 151 to 154 (DSAR) contributes to the substrate binding site. The beta-D-fructose 1,6-bisphosphate site is built by Arg-156 and His-171. His-178 (proton acceptor) is an active-site residue. Tyr-223 is modified (phosphotyrosine). Substrate is bound at residue Thr-232.

It belongs to the LDH/MDH superfamily. LDH family. In terms of assembly, homotetramer.

It localises to the cytoplasm. The catalysed reaction is (S)-lactate + NAD(+) = pyruvate + NADH + H(+). Its pathway is fermentation; pyruvate fermentation to lactate; (S)-lactate from pyruvate: step 1/1. Allosterically activated by fructose 1,6-bisphosphate (FBP). Its function is as follows. Catalyzes the conversion of lactate to pyruvate. This chain is L-lactate dehydrogenase 1, found in Bacillus anthracis.